A 1288-amino-acid chain; its full sequence is Mitogen-activated protein kinase kinase kinase 6 (1288 aa).

In terms of domain architecture, Protein kinase spans 648-906 (TGERLVLGKG…AQTLLGDPFL (259 aa)). Residues 654 to 662 (LGKGTYGVV) and Lys677 contribute to the ATP site. The active-site Proton acceptor is Asp771. Thr806 bears the Phosphothreonine mark. The interval 899–997 (TLLGDPFLQP…SSGLSLLHQE (99 aa)) is disordered. A compositionally biased stretch (low complexity) spans 914–952 (SPSSPRHAPRPSDAPSASPTPSANSTTQSQTFPCPQAPS). Ser964 and Ser984 each carry phosphoserine. Residues 980 to 989 (EEPASPEESS) are compositionally biased toward low complexity. Residues 1004 to 1029 (LAAVLEQELPALAENLHQEQKQEQGA) adopt a coiled-coil conformation. Over residues 1123–1134 (VEKEAVSPRSEE) the composition is skewed to basic and acidic residues. The segment at 1123 to 1157 (VEKEAVSPRSEELSNEGDSQQSPGQQSPLPVEPEQ) is disordered. Ser1129 and Ser1149 each carry phosphoserine. A compositionally biased stretch (low complexity) spans 1141-1151 (SQQSPGQQSPL). Positions 1166-1205 (LSLLRAETDRLREILAGKEREYQALVQRALQRLNEEARTY) form a coiled coil.

It belongs to the protein kinase superfamily. STE Ser/Thr protein kinase family. MAP kinase kinase kinase subfamily. In terms of assembly, binds both upstream activators and downstream substrates in multimolecular complexes. Mg(2+) serves as cofactor.

The catalysed reaction is L-seryl-[protein] + ATP = O-phospho-L-seryl-[protein] + ADP + H(+). It carries out the reaction L-threonyl-[protein] + ATP = O-phospho-L-threonyl-[protein] + ADP + H(+). Its activity is regulated as follows. Activated by phosphorylation on Thr-806. Catalytically active only when complexed with MAP3K5, with MAP3K5 supporting the stability and the active configuration of MAP3K6 and MAP3K6 activating MAP3K5 by direct phosphorylation. Component of a protein kinase signal transduction cascade. Activates the JNK, but not ERK or p38 kinase pathways. The sequence is that of Mitogen-activated protein kinase kinase kinase 6 (MAP3K6) from Homo sapiens (Human).